Reading from the N-terminus, the 165-residue chain is SsrA-binding protein (165 aa).

It belongs to the SmpB family.

The protein localises to the cytoplasm. Its function is as follows. Required for rescue of stalled ribosomes mediated by trans-translation. Binds to transfer-messenger RNA (tmRNA), required for stable association of tmRNA with ribosomes. tmRNA and SmpB together mimic tRNA shape, replacing the anticodon stem-loop with SmpB. tmRNA is encoded by the ssrA gene; the 2 termini fold to resemble tRNA(Ala) and it encodes a 'tag peptide', a short internal open reading frame. During trans-translation Ala-aminoacylated tmRNA acts like a tRNA, entering the A-site of stalled ribosomes, displacing the stalled mRNA. The ribosome then switches to translate the ORF on the tmRNA; the nascent peptide is terminated with the 'tag peptide' encoded by the tmRNA and targeted for degradation. The ribosome is freed to recommence translation, which seems to be the essential function of trans-translation. The protein is SsrA-binding protein of Ruthia magnifica subsp. Calyptogena magnifica.